The following is a 355-amino-acid chain: Peptide chain release factor 1 (355 aa).

Residue Gln-233 is modified to N5-methylglutamine.

The protein belongs to the prokaryotic/mitochondrial release factor family. In terms of processing, methylated by PrmC. Methylation increases the termination efficiency of RF1.

The protein resides in the cytoplasm. Functionally, peptide chain release factor 1 directs the termination of translation in response to the peptide chain termination codons UAG and UAA. The protein is Peptide chain release factor 1 of Clostridium tetani (strain Massachusetts / E88).